Reading from the N-terminus, the 479-residue chain is MSHNLKQLFQQHKVKGLSINSKTVKDKDVFFAIKGRNTDGNAFIKDALSKGAVLVITDNKKNIVIDKVIYVKDVQAALHEAIEIFYPKKPKNLIAVTGTNGKSSVVSYIAQTHSLLGKKAASIGTIGVEIFGCDNLINDVPELTTLDYLSFRKIAHNLAENGIEYLVFEASSHGLDQARLREIKVNIACFTSFSQDHLDYHHTKENYLLAKLKLFINHLLPNGIAILNSDIEEIEFVKDYLHNHNIKFITVGKKGDLEITRINCSLKGQNINFTFNNREYNFNTPIIGSFQASNLLIAVLSMHYTGFAFDDVIDSLVEVKAVKGRMERIDNTNIFVDYAHTPDALEKALTELKNIKLHDSKLSVVFGCGGNRDKAKRSLMGQMAAKRADTIIITDDNPRNEDPKLIRAEIISGIEKADYTEIANREEAIKYGINNLKQDDILLVAGKGHENYQIIGDKKLPFDDAEVVRKCVKVCHPVA.

Residue S21 participates in UDP-N-acetyl-alpha-D-muramoyl-L-alanyl-D-glutamate binding. Residue G98–S104 coordinates ATP. UDP-N-acetyl-alpha-D-muramoyl-L-alanyl-D-glutamate-binding positions include T144–T145, S171, Q177, and R179. An N6-carboxylysine modification is found at K211. Meso-2,6-diaminopimelate-binding positions include R372, D396–R399, G446, and E450. A Meso-diaminopimelate recognition motif motif is present at residues D396 to R399.

The protein belongs to the MurCDEF family. MurE subfamily. It depends on Mg(2+) as a cofactor. Carboxylation is probably crucial for Mg(2+) binding and, consequently, for the gamma-phosphate positioning of ATP.

The protein localises to the cytoplasm. The enzyme catalyses UDP-N-acetyl-alpha-D-muramoyl-L-alanyl-D-glutamate + meso-2,6-diaminopimelate + ATP = UDP-N-acetyl-alpha-D-muramoyl-L-alanyl-gamma-D-glutamyl-meso-2,6-diaminopimelate + ADP + phosphate + H(+). The protein operates within cell wall biogenesis; peptidoglycan biosynthesis. Its function is as follows. Catalyzes the addition of meso-diaminopimelic acid to the nucleotide precursor UDP-N-acetylmuramoyl-L-alanyl-D-glutamate (UMAG) in the biosynthesis of bacterial cell-wall peptidoglycan. The chain is UDP-N-acetylmuramoyl-L-alanyl-D-glutamate--2,6-diaminopimelate ligase from Rickettsia montanensis.